The sequence spans 952 residues: Lysosomal alpha-glucosidase (952 aa).

The first 27 residues, 1–27 (MRVRHPPCSRRLLAICALVSLATAALL), serve as a signal peptide directing secretion. A propeptide spanning residues 28-69 (GHILLHDFLLVPRELSGSSPVLEETHPAHQQGASRPGPRDAQ) is cleaved from the precursor. The tract at residues 47–80 (PVLEETHPAHQQGASRPGPRDAQAHLGRPRAVPT) is disordered. The region spanning 80 to 131 (TQCDVPPNSRFDCAPDKAITREQCDARGCCYIPAKQGLRGAQMGQPWCFFPP) is the P-type domain. 3 disulfide bridges follow: Cys82–Cys109, Cys92–Cys108, and Cys103–Cys127. Residues Asn140, Asn233, and Asn390 are each glycosylated (N-linked (GlcNAc...) asparagine). A substrate-binding site is contributed by Asp404. Asn470 carries an N-linked (GlcNAc...) asparagine glycan. Asp518 acts as the Nucleophile in catalysis. Glu521 is an active-site residue. Residues Cys533 and Cys558 are joined by a disulfide bond. Residues Arg600 and Asp616 each contribute to the substrate site. Cys647 and Cys658 are oxidised to a cystine. N-linked (GlcNAc...) asparagine glycosylation is present at Asn652. His674 contributes to the substrate binding site. 2 N-linked (GlcNAc...) asparagine glycosylation sites follow: Asn882 and Asn925.

It belongs to the glycosyl hydrolase 31 family.

The protein localises to the lysosome. It is found in the lysosome membrane. The enzyme catalyses Hydrolysis of terminal, non-reducing (1-&gt;4)-linked alpha-D-glucose residues with release of alpha-D-glucose.. Essential for the degradation of glycogen in lysosomes. Has highest activity on alpha-1,4-linked glycosidic linkages, but can also hydrolyze alpha-1,6-linked glucans. This Pongo abelii (Sumatran orangutan) protein is Lysosomal alpha-glucosidase (GAA).